We begin with the raw amino-acid sequence, 362 residues long: MERITVTLGERSYPITIAAGLFNEPASFLPLKSGDQVMLVTNETLAPLYLDKVRGVLERAGVNVDSVILPDGEQYKSLTVLDTVFTALLKKPHGRDTTLVALGGGVIGDLTGFAAASYQRGVRFIQVPTTLLSQVDSSVGGKTAVNHPLGKNMIGAFYQPASVVVDLDCLKTLPARELASGLAEVIKYGIILDADFFTWLEENLDALLRLDGPAMAYCIRRCCELKAEVVAADEREAGLRALLNLGHTFGHAIEAEMGYGNWLHGEAVAAGIVMAARASERLGQFSSADTQRIIALLERAGLPVNGPCEMSAQDYLPHMLRDKKVLAGELRLVLPLAIGKSEVRGGVSHEVVLSAIADCQQA.

NAD(+) contacts are provided by residues 71–76 (DGEQYK), 105–109 (GVIGD), 129–130 (TT), Lys-142, Lys-151, and 169–172 (CLKT). Residues Glu-184, His-247, and His-264 each contribute to the Zn(2+) site.

The protein belongs to the sugar phosphate cyclases superfamily. Dehydroquinate synthase family. Co(2+) is required as a cofactor. The cofactor is Zn(2+). NAD(+) serves as cofactor.

The protein localises to the cytoplasm. The catalysed reaction is 7-phospho-2-dehydro-3-deoxy-D-arabino-heptonate = 3-dehydroquinate + phosphate. Its pathway is metabolic intermediate biosynthesis; chorismate biosynthesis; chorismate from D-erythrose 4-phosphate and phosphoenolpyruvate: step 2/7. Its function is as follows. Catalyzes the conversion of 3-deoxy-D-arabino-heptulosonate 7-phosphate (DAHP) to dehydroquinate (DHQ). This chain is 3-dehydroquinate synthase, found in Salmonella schwarzengrund (strain CVM19633).